We begin with the raw amino-acid sequence, 434 residues long: MAMQKIFAREILDSRGNPTVEVDLHTAKGRFRAAVPSGASTGIYEALELRDGDKGRYLGKGVLKAVENINNTLGPALLQKKLSVVDQEKVDKFMIELDGTENKSKFGANAILGVSLAVCKAGAAEKGVPLYRHIADLAGNPDLILPVPAFNVINGGSHAGNKLAMQEFMILPVGASSFKEAMRIGAEVYHHLKGVIKAKYGKDATNVGDEGGFAPNILENNEALELLKTAIQAAGYPDKVVIGMDVAASEFYRNGKYDLDFKSPDDPARHITGEKLGELYKSFIKNYPVVSIEDPFDQDDWATWTSFLSGVNIQIVGDDLTVTNPKRIAQAVEKKACNCLLLKVNQIGSVTESIQACKLAQSNGWGVMVSHRSGETEDTFIADLVVGLCTGQIKTGAPCRSERLAKYNQLMRIEEALGDKAIFAGRKFRNPKAK.

Ala2 carries the N-acetylalanine modification. A Phosphothreonine modification is found at Thr72. Phosphoserine occurs at positions 83 and 157. Substrate contacts are provided by His158 and Glu167. Phosphoserine is present on Ser176. Thr205 is modified (phosphothreonine). Residue Glu210 is the Proton donor of the active site. At Thr229 the chain carries Phosphothreonine. The residue at position 236 (Tyr236) is a Phosphotyrosine. Asp245 serves as a coordination point for Mg(2+). At Ser263 the chain carries Phosphoserine. 2 residues coordinate substrate: Glu293 and Asp318. Mg(2+)-binding residues include Glu293 and Asp318. Catalysis depends on Lys343, which acts as the Proton acceptor. Substrate-binding positions include 370 to 373 (SHRS) and Lys394.

Belongs to the enolase family. In terms of assembly, mammalian enolase is composed of 3 isozyme subunits, alpha, beta and gamma, which can form homodimers or heterodimers which are cell-type and development-specific. Interacts with PNKD. It depends on Mg(2+) as a cofactor. As to expression, the alpha/alpha homodimer is expressed in embryo and in most adult tissues. The alpha/beta heterodimer and the beta/beta homodimer are found in striated muscle, and the alpha/gamma heterodimer and the gamma/gamma homodimer in neurons.

The protein resides in the cytoplasm. It catalyses the reaction (2R)-2-phosphoglycerate = phosphoenolpyruvate + H2O. The protein operates within carbohydrate degradation; glycolysis; pyruvate from D-glyceraldehyde 3-phosphate: step 4/5. Functionally, glycolytic enzyme that catalyzes the conversion of 2-phosphoglycerate to phosphoenolpyruvate. Appears to have a function in striated muscle development and regeneration. The chain is Beta-enolase (ENO3) from Homo sapiens (Human).